The sequence spans 579 residues: DELLA protein GAIP (579 aa).

Positions 1–25 (MKREHHYLHPRPEPPSVATGSNRES) are disordered. A DELLA motif motif is present at residues 46-50 (DELLA). The region spanning 202–570 (VDSQENGIQL…RPLIATSAWK (369 aa)) is the GRAS domain. The tract at residues 209-263 (IQLVHALMVCAEAVQQNNLNLAEALVKRIDYLAVSQAGAMRKVATFFAEALARRI) is leucine repeat I (LRI). The tract at residues 281-346 (QMHFYESCPY…SGPPTFRLTG (66 aa)) is VHIID. A VHIID motif is present at residues 312 to 316 (VHVID). The interval 360–392 (DVGWKLVKFAETLHVEFEYRGFVANSLADLDAS) is leucine repeat II (LRII). The segment at 404-491 (VVVNSVFELH…EMYLGKQICN (88 aa)) is PFYRE. The LXXLL motif motif lies at 412–416 (LHQLL). Residues 494–570 (ACEGADRVER…RPLIATSAWK (77 aa)) form an SAW region.

Belongs to the GRAS family. DELLA subfamily. Post-translationally, phosphorylated. Ubiquitinated. Upon GA application it is ubiquitinated, leading to its subsequent degradation.

The protein resides in the nucleus. Its function is as follows. Probable transcriptional regulator that acts as a repressor of the gibberellin (GA) signaling pathway. Probably acts by participating in large multiprotein complexes that represses transcription of GA-inducible genes. Upon GA application, it is degraded by the proteasome, allowing the GA signaling pathway. This is DELLA protein GAIP (GAIP) from Cucurbita maxima (Pumpkin).